Reading from the N-terminus, the 93-residue chain is Ribonuclease P protein component 4 (93 aa).

Zn(2+) contacts are provided by Cys55, Cys58, Cys81, and Cys83.

This sequence belongs to the eukaryotic/archaeal RNase P protein component 4 family. Consists of a catalytic RNA component and at least 4-5 protein subunits. The cofactor is Zn(2+).

The protein localises to the cytoplasm. It carries out the reaction Endonucleolytic cleavage of RNA, removing 5'-extranucleotides from tRNA precursor.. Functionally, part of ribonuclease P, a protein complex that generates mature tRNA molecules by cleaving their 5'-ends. This chain is Ribonuclease P protein component 4, found in Halobacterium salinarum (strain ATCC 29341 / DSM 671 / R1).